Reading from the N-terminus, the 561-residue chain is uncharacterized protein (561 aa).

Disordered regions lie at residues 20-42 and 82-283; these read IQEQ…GCSP and QIGS…STPF. Residues 103-131 show a composition bias toward basic and acidic residues; it reads DKISEDTDQERVVVCESLENKSSSKDKSP. 2 stretches are compositionally biased toward basic residues: residues 135–156 and 165–185; these read RSPK…KSSK and KSSK…KRYR. Composition is skewed to basic and acidic residues over residues 192–203, 211–247, and 259–272; these read SLSRDRSSSRDR, YSRD…DRSP, and PLRD…RSVS.

This sequence belongs to the mimivirus L41 family.

This is an uncharacterized protein from Acanthamoeba polyphaga (Amoeba).